We begin with the raw amino-acid sequence, 118 residues long: Large ribosomal subunit protein bL20 (118 aa).

This sequence belongs to the bacterial ribosomal protein bL20 family.

Binds directly to 23S ribosomal RNA and is necessary for the in vitro assembly process of the 50S ribosomal subunit. It is not involved in the protein synthesizing functions of that subunit. In Caldicellulosiruptor saccharolyticus (strain ATCC 43494 / DSM 8903 / Tp8T 6331), this protein is Large ribosomal subunit protein bL20.